The chain runs to 407 residues: Putative glucose/galactose transporter (407 aa).

The next 12 membrane-spanning stretches (helical) occupy residues 11 to 31, 47 to 67, 70 to 90, 96 to 116, 139 to 159, 180 to 200, 225 to 245, 263 to 283, 300 to 320, 321 to 341, 349 to 369, and 378 to 398; these read GSLT…DILI, LIQF…GNVI, IGYP…CALF, FGSY…IVCL, VQAF…LLIF, VQMP…IMYL, FVFG…IGSF, HYLV…SVLM, IVLI…ALTF, VGFF…LNLG, GVIS…GAVT, and NLLY…FFAL.

The protein belongs to the major facilitator superfamily. FHS transporter (TC 2.A.1.7) family.

The protein localises to the cell inner membrane. Its function is as follows. Intake of glucose and galactose. The polypeptide is Putative glucose/galactose transporter (gluP) (Helicobacter pylori (strain ATCC 700392 / 26695) (Campylobacter pylori)).